The following is a 589-amino-acid chain: (E)-beta-ocimene synthase, chloroplastic (589 aa).

The N-terminal 25 residues, 1–25 (MAAHNLCFNSAFVCNVHHQKTQHFP), are a transit peptide targeting the chloroplast. Positions 302, 339, 343, 480, and 483 each coordinate (2E,6E)-farnesyl diphosphate. Positions 339 and 343 each coordinate Mg(2+). A DDXXD motif motif is present at residues 339–343 (DDIYD). Residues asparagine 483, threonine 487, and glutamate 491 each coordinate Mg(2+).

The protein belongs to the terpene synthase family. Tpsb subfamily. It depends on Mg(2+) as a cofactor. Mn(2+) is required as a cofactor. Expressed exclusively in flowers.

Its subcellular location is the plastid. It localises to the chloroplast. It catalyses the reaction (2E,6E)-farnesyl diphosphate = (3E,6E)-alpha-farnesene + diphosphate. Its pathway is secondary metabolite biosynthesis; terpenoid biosynthesis. Predominantly involved in monoterpene (C10) biosynthesis. Using GPP as substrate, the major product is (E)-beta-ocimene with minor amounts of (Z)-beta-ocimene and myrcene. Using FPP as substrate, could also be able to synthesize in vitro sesquiterpenes (C15) with (E,E)-alpha-farnesene as the major product and with (Z,E)-alpha-farnesene and (E,E)-beta-farnesene as minor products. The protein is (E)-beta-ocimene synthase, chloroplastic (TPS02) of Arabidopsis thaliana (Mouse-ear cress).